Consider the following 127-residue polypeptide: Riboflavin kinase (127 aa).

Position 10–15 (Gly-10–Lys-15) interacts with CDP. Mg(2+) contacts are provided by Thr-39 and Asn-41. FMN is bound by residues Thr-96 and Glu-104. Ile-109–Arg-112 contacts CDP.

The protein belongs to the archaeal riboflavin kinase family. Requires Mg(2+) as cofactor.

It catalyses the reaction riboflavin + CTP = CDP + FMN + H(+). It participates in cofactor biosynthesis; FMN biosynthesis; FMN from riboflavin (CTP route): step 1/1. In terms of biological role, catalyzes the CTP-dependent phosphorylation of riboflavin (vitamin B2) to form flavin mononucleotide (FMN). The polypeptide is Riboflavin kinase (Methanococcus maripaludis (strain DSM 14266 / JCM 13030 / NBRC 101832 / S2 / LL)).